The following is a 205-amino-acid chain: Holliday junction branch migration complex subunit RuvA (205 aa).

The segment at Met1–Ala63 is domain I. The domain II stretch occupies residues Thr64–Val142. The interval Ala143–Ala153 is flexible linker. The domain III stretch occupies residues Ala153–Gly205.

This sequence belongs to the RuvA family. In terms of assembly, homotetramer. Forms an RuvA(8)-RuvB(12)-Holliday junction (HJ) complex. HJ DNA is sandwiched between 2 RuvA tetramers; dsDNA enters through RuvA and exits via RuvB. An RuvB hexamer assembles on each DNA strand where it exits the tetramer. Each RuvB hexamer is contacted by two RuvA subunits (via domain III) on 2 adjacent RuvB subunits; this complex drives branch migration. In the full resolvosome a probable DNA-RuvA(4)-RuvB(12)-RuvC(2) complex forms which resolves the HJ.

The protein resides in the cytoplasm. Its function is as follows. The RuvA-RuvB-RuvC complex processes Holliday junction (HJ) DNA during genetic recombination and DNA repair, while the RuvA-RuvB complex plays an important role in the rescue of blocked DNA replication forks via replication fork reversal (RFR). RuvA specifically binds to HJ cruciform DNA, conferring on it an open structure. The RuvB hexamer acts as an ATP-dependent pump, pulling dsDNA into and through the RuvAB complex. HJ branch migration allows RuvC to scan DNA until it finds its consensus sequence, where it cleaves and resolves the cruciform DNA. This is Holliday junction branch migration complex subunit RuvA from Brevibacillus brevis (strain 47 / JCM 6285 / NBRC 100599).